The primary structure comprises 173 residues: Superoxide dismutase [Cu-Zn] (173 aa).

The signal sequence occupies residues M1 to A22. Cu cation contacts are provided by H67, H69, and H92. A disulfide bridge connects residues C74 and C169. 4 residues coordinate Zn(2+): H92, H101, H110, and D113. H147 contributes to the Cu cation binding site.

It belongs to the Cu-Zn superoxide dismutase family. As to quaternary structure, homodimer. The cofactor is Cu cation. Zn(2+) serves as cofactor.

Its subcellular location is the periplasm. It carries out the reaction 2 superoxide + 2 H(+) = H2O2 + O2. In terms of biological role, destroys radicals which are normally produced within the cells and which are toxic to biological systems. The protein is Superoxide dismutase [Cu-Zn] (sodC) of Photobacterium leiognathi.